Consider the following 191-residue polypeptide: NF-kappa-B inhibitor-interacting Ras-like protein 2 (191 aa).

The small GTPase-like stretch occupies residues methionine 1–glycine 191. GTP is bound at residue glycine 11–threonine 18. The Effector region signature appears at methionine 35–tyrosine 43. GTP-binding positions include aspartate 61–leucine 65 and asparagine 120–aspartate 123. Residues glutamine 170–glycine 191 form a disordered region.

Belongs to the small GTPase superfamily. Ras family. KappaB-Ras subfamily.

It is found in the cytoplasm. Functionally, atypical Ras-like protein that acts as a potent regulator of NF-kappa-B activity by preventing the degradation of NF-kappa-B inhibitor beta (NFKBIB) by most signals, explaining why NFKBIB is more resistant to degradation. This Gallus gallus (Chicken) protein is NF-kappa-B inhibitor-interacting Ras-like protein 2 (NKIRAS2).